A 339-amino-acid polypeptide reads, in one-letter code: Ubiquitin carboxyl-terminal hydrolase 50 (339 aa).

One can recognise a USP domain in the interval 44–339; the sequence is TGLWNLGNTC…AFCKNSVTQA (296 aa). The active-site Nucleophile is the Cys-53. His-327 serves as the catalytic Proton acceptor.

It belongs to the peptidase C19 family. As to expression, weakly expressed in a few tissues.

Its subcellular location is the cytoplasm. It is found in the cytoskeleton. The protein resides in the microtubule organizing center. It localises to the centrosome. The protein localises to the nucleus. It catalyses the reaction Thiol-dependent hydrolysis of ester, thioester, amide, peptide and isopeptide bonds formed by the C-terminal Gly of ubiquitin (a 76-residue protein attached to proteins as an intracellular targeting signal).. Its function is as follows. Deubiquitinating enzyme that removes conjugated ubiquitin from specific proteins to regulate different cellular processes. Regulates the inflammasome signaling pathway by deubiquitinating 'Lys-63'-linked polyubiquitination of the PYCARD/ASC adapter protein. Regulates the ubiquitination and stability of the ACE2 protein. Acts as a negative regulator of the G2/M checkpoint pathway, by preventing serine/threonine kinase WEE1 degradation, thereby repressing entry into mitosis following activation of the G2/M DNA damage checkpoint. The polypeptide is Ubiquitin carboxyl-terminal hydrolase 50 (Homo sapiens (Human)).